The primary structure comprises 269 residues: Indole-3-glycerol phosphate synthase 1 (269 aa).

This sequence belongs to the TrpC family.

The enzyme catalyses 1-(2-carboxyphenylamino)-1-deoxy-D-ribulose 5-phosphate + H(+) = (1S,2R)-1-C-(indol-3-yl)glycerol 3-phosphate + CO2 + H2O. Its pathway is amino-acid biosynthesis; L-tryptophan biosynthesis; L-tryptophan from chorismate: step 4/5. The sequence is that of Indole-3-glycerol phosphate synthase 1 (trpC1) from Streptomyces coelicolor (strain ATCC BAA-471 / A3(2) / M145).